The following is a 228-amino-acid chain: Phosphatidylserine decarboxylase proenzyme (228 aa).

Ser197 functions as the Schiff-base intermediate with substrate; via pyruvic acid in the catalytic mechanism. Position 197 is a pyruvic acid (Ser); by autocatalysis (Ser197).

This sequence belongs to the phosphatidylserine decarboxylase family. PSD-A subfamily. Heterodimer of a large membrane-associated beta subunit and a small pyruvoyl-containing alpha subunit. Pyruvate is required as a cofactor. In terms of processing, is synthesized initially as an inactive proenzyme. Formation of the active enzyme involves a self-maturation process in which the active site pyruvoyl group is generated from an internal serine residue via an autocatalytic post-translational modification. Two non-identical subunits are generated from the proenzyme in this reaction, and the pyruvate is formed at the N-terminus of the alpha chain, which is derived from the carboxyl end of the proenzyme. The post-translation cleavage follows an unusual pathway, termed non-hydrolytic serinolysis, in which the side chain hydroxyl group of the serine supplies its oxygen atom to form the C-terminus of the beta chain, while the remainder of the serine residue undergoes an oxidative deamination to produce ammonia and the pyruvoyl prosthetic group on the alpha chain.

Its subcellular location is the cell membrane. It carries out the reaction a 1,2-diacyl-sn-glycero-3-phospho-L-serine + H(+) = a 1,2-diacyl-sn-glycero-3-phosphoethanolamine + CO2. It functions in the pathway phospholipid metabolism; phosphatidylethanolamine biosynthesis; phosphatidylethanolamine from CDP-diacylglycerol: step 2/2. Its function is as follows. Catalyzes the formation of phosphatidylethanolamine (PtdEtn) from phosphatidylserine (PtdSer). The sequence is that of Phosphatidylserine decarboxylase proenzyme from Bacteroides thetaiotaomicron (strain ATCC 29148 / DSM 2079 / JCM 5827 / CCUG 10774 / NCTC 10582 / VPI-5482 / E50).